The following is a 266-amino-acid chain: Hydroxyethylthiazole kinase (266 aa).

M44 is a binding site for substrate. The ATP site is built by K120 and T166. G193 contacts substrate.

The protein belongs to the Thz kinase family. The cofactor is Mg(2+).

It carries out the reaction 5-(2-hydroxyethyl)-4-methylthiazole + ATP = 4-methyl-5-(2-phosphooxyethyl)-thiazole + ADP + H(+). It participates in cofactor biosynthesis; thiamine diphosphate biosynthesis; 4-methyl-5-(2-phosphoethyl)-thiazole from 5-(2-hydroxyethyl)-4-methylthiazole: step 1/1. Its function is as follows. Catalyzes the phosphorylation of the hydroxyl group of 4-methyl-5-beta-hydroxyethylthiazole (THZ). The protein is Hydroxyethylthiazole kinase of Syntrophomonas wolfei subsp. wolfei (strain DSM 2245B / Goettingen).